A 150-amino-acid polypeptide reads, in one-letter code: uncharacterized protein (150 aa).

The protein localises to the plastid. It localises to the chloroplast. This is an uncharacterized protein from Pyropia yezoensis (Susabi-nori).